The following is a 426-amino-acid chain: NADH-quinone oxidoreductase subunit H 1 (426 aa).

The next 10 membrane-spanning stretches (helical) occupy residues 22–42 (LWAT…VMLM), 91–111 (FLFW…YLVI), 124–144 (IGVL…VMAG), 163–183 (MVSY…MTSL), 206–226 (FIFK…IAMV), 258–278 (LFFL…VTLW), 299–319 (FSVF…IGWV), 331–351 (AIGL…LLIP), 357–377 (VSDI…YIWY), and 392–412 (IGWK…AVLG).

It belongs to the complex I subunit 1 family. In terms of assembly, NDH-1 is composed of 14 different subunits. Subunits NuoA, H, J, K, L, M, N constitute the membrane sector of the complex.

The protein resides in the cell inner membrane. It carries out the reaction a quinone + NADH + 5 H(+)(in) = a quinol + NAD(+) + 4 H(+)(out). NDH-1 shuttles electrons from NADH, via FMN and iron-sulfur (Fe-S) centers, to quinones in the respiratory chain. The immediate electron acceptor for the enzyme in this species is believed to be ubiquinone. Couples the redox reaction to proton translocation (for every two electrons transferred, four hydrogen ions are translocated across the cytoplasmic membrane), and thus conserves the redox energy in a proton gradient. This subunit may bind ubiquinone. This chain is NADH-quinone oxidoreductase subunit H 1, found in Koribacter versatilis (strain Ellin345).